The chain runs to 272 residues: Phosphate import ATP-binding protein PstB (272 aa).

An ABC transporter domain is found at 26 to 267 (VAARNLNFYY…PADRRTQDYI (242 aa)). 58–65 (GPSGCGKS) contributes to the ATP binding site.

It belongs to the ABC transporter superfamily. Phosphate importer (TC 3.A.1.7) family. In terms of assembly, the complex is composed of two ATP-binding proteins (PstB), two transmembrane proteins (PstC and PstA) and a solute-binding protein (PstS).

Its subcellular location is the cell inner membrane. The catalysed reaction is phosphate(out) + ATP + H2O = ADP + 2 phosphate(in) + H(+). Its function is as follows. Part of the ABC transporter complex PstSACB involved in phosphate import. Responsible for energy coupling to the transport system. This chain is Phosphate import ATP-binding protein PstB, found in Nitrobacter hamburgensis (strain DSM 10229 / NCIMB 13809 / X14).